A 568-amino-acid chain; its full sequence is Potassium-transporting ATPase potassium-binding subunit (568 aa).

10 helical membrane passes run 3-23 (TEIL…YPLG), 64-84 (FLKA…VLLV), 133-153 (FVIM…MAGV), 179-199 (ILLP…TPMG), 255-275 (MVEC…LGFY), 281-301 (LGYS…FINV), 375-395 (FGGV…AVFI), 418-438 (IATF…AISS), 497-517 (IVLI…AGLL), and 535-555 (VTFA…SFFP).

This sequence belongs to the KdpA family. In terms of assembly, the system is composed of three essential subunits: KdpA, KdpB and KdpC.

It is found in the cell inner membrane. Its function is as follows. Part of the high-affinity ATP-driven potassium transport (or Kdp) system, which catalyzes the hydrolysis of ATP coupled with the electrogenic transport of potassium into the cytoplasm. This subunit binds the periplasmic potassium ions and delivers the ions to the membrane domain of KdpB through an intramembrane tunnel. The protein is Potassium-transporting ATPase potassium-binding subunit of Bacteroides fragilis (strain ATCC 25285 / DSM 2151 / CCUG 4856 / JCM 11019 / LMG 10263 / NCTC 9343 / Onslow / VPI 2553 / EN-2).